The chain runs to 349 residues: METNFSIPLNETEEVLPEPAGHTVLWIFSLLVHGVTFIFGVLGNGLVIWVAGFLMTRTVNTICYLNLALADFSFSAILPFHMVSVAMREKWPFGSFLCKLVHVMIDINLFVSVYLITIIALDRCICVLHPAWAQNHRTMSLAKRVMTGLWILTIVLTLPNFIFWTTISTTNGDTYCIFNFPFWGDTAVERLNVFITMAKVFLILHFIIGFSMPMSIITVCYGIIAAKIHRNHMIKSSRPLRVFAAVVASFFICWFPYELIGILMAVWLKEMLLNGKYKIILVLINPTSSLAFFNSCLNPILYVFLGSNFQERLIRSLPTSLERALTEVPDSAQTSNTHTTSASPPEETE.

The Extracellular segment spans residues 1-27; that stretch reads METNFSIPLNETEEVLPEPAGHTVLWI. 2 N-linked (GlcNAc...) asparagine glycosylation sites follow: Asn4 and Asn10. The helical transmembrane segment at 28–50 threads the bilayer; it reads FSLLVHGVTFIFGVLGNGLVIWV. Residues 51-61 lie on the Cytoplasmic side of the membrane; that stretch reads AGFLMTRTVNT. The chain crosses the membrane as a helical span at residues 62-83; it reads ICYLNLALADFSFSAILPFHMV. The Extracellular segment spans residues 84 to 100; that stretch reads SVAMREKWPFGSFLCKL. A disulfide bridge connects residues Cys98 and Cys176. Residues 101–121 traverse the membrane as a helical segment; that stretch reads VHVMIDINLFVSVYLITIIAL. Residues 122 to 140 are Cytoplasmic-facing; it reads DRCICVLHPAWAQNHRTMS. Residues 141-162 traverse the membrane as a helical segment; it reads LAKRVMTGLWILTIVLTLPNFI. Residues 163 to 205 lie on the Extracellular side of the membrane; sequence FWTTISTTNGDTYCIFNFPFWGDTAVERLNVFITMAKVFLILH. Residues 206 to 226 form a helical membrane-spanning segment; it reads FIIGFSMPMSIITVCYGIIAA. The Cytoplasmic segment spans residues 227 to 242; it reads KIHRNHMIKSSRPLRV. A helical membrane pass occupies residues 243 to 266; the sequence is FAAVVASFFICWFPYELIGILMAV. Topologically, residues 267 to 286 are extracellular; that stretch reads WLKEMLLNGKYKIILVLINP. Residues 287–306 traverse the membrane as a helical segment; that stretch reads TSSLAFFNSCLNPILYVFLG. Over 307–349 the chain is Cytoplasmic; the sequence is SNFQERLIRSLPTSLERALTEVPDSAQTSNTHTTSASPPEETE. The segment at 327 to 349 is disordered; the sequence is EVPDSAQTSNTHTTSASPPEETE. Residues 331–343 show a composition bias toward polar residues; it reads SAQTSNTHTTSAS.

It belongs to the G-protein coupled receptor 1 family.

It is found in the cell membrane. Low affinity receptor for N-formyl-methionyl peptides, which are powerful neutrophils chemotactic factors. Binding of FMLP to the receptor causes activation of neutrophils. This response is mediated via a G-protein that activates a phosphatidylinositol-calcium second messenger system. This chain is N-formyl peptide receptor 3 (FPR3), found in Gorilla gorilla gorilla (Western lowland gorilla).